The chain runs to 447 residues: Na(+)-translocating NADH-quinone reductase subunit A (447 aa).

This sequence belongs to the NqrA family. As to quaternary structure, composed of six subunits; NqrA, NqrB, NqrC, NqrD, NqrE and NqrF.

It catalyses the reaction a ubiquinone + n Na(+)(in) + NADH + H(+) = a ubiquinol + n Na(+)(out) + NAD(+). Functionally, NQR complex catalyzes the reduction of ubiquinone-1 to ubiquinol by two successive reactions, coupled with the transport of Na(+) ions from the cytoplasm to the periplasm. NqrA to NqrE are probably involved in the second step, the conversion of ubisemiquinone to ubiquinol. This Neisseria gonorrhoeae (strain NCCP11945) protein is Na(+)-translocating NADH-quinone reductase subunit A.